A 277-amino-acid chain; its full sequence is MQMESQRRDVFYVSDGTAITCETLGHVVLGQFAVQPNEKTFPFVESDEKLSELLKQIQRSYQLHGVKPLVFFSMVIPEMRTRLLQAPAHFYDVLESIVQRVSLDIEMEPAPKLQRSRSVGKDSDTYFDRIAAIEYTLAHDDGVSLKDLDRADIILLGVSRSGKTPTSLYMAMQFGLRVVNYPFIAEDMHAMRLLPEFEFHRHKLFGLTINAERLTEIRENRLAGSEYASNQQCQQELATVEALFRREAISYINTSSLSVEEISTRILERTGLKRRLF.

Residue G157–T164 coordinates ADP.

It belongs to the pyruvate, phosphate/water dikinase regulatory protein family. PSRP subfamily.

It catalyses the reaction [pyruvate, water dikinase] + ADP = [pyruvate, water dikinase]-phosphate + AMP + H(+). The enzyme catalyses [pyruvate, water dikinase]-phosphate + phosphate + H(+) = [pyruvate, water dikinase] + diphosphate. Bifunctional serine/threonine kinase and phosphorylase involved in the regulation of the phosphoenolpyruvate synthase (PEPS) by catalyzing its phosphorylation/dephosphorylation. In Vibrio cholerae serotype O1 (strain ATCC 39541 / Classical Ogawa 395 / O395), this protein is Putative phosphoenolpyruvate synthase regulatory protein.